The sequence spans 428 residues: Adenylosuccinate synthetase (428 aa).

GTP-binding positions include 12–18 (GDEGKGK) and 40–42 (GHS). Asp-13 (proton acceptor) is an active-site residue. Mg(2+)-binding residues include Asp-13 and Gly-40. IMP contacts are provided by residues 13 to 16 (DEGK), 38 to 41 (NAGH), Thr-128, Arg-142, Gln-223, Thr-238, and Arg-302. The active-site Proton donor is the His-41. A substrate-binding site is contributed by 298 to 304 (VTTGRPR). GTP is bound by residues Arg-304, 330–332 (KLD), and 412–414 (GTG).

This sequence belongs to the adenylosuccinate synthetase family. As to quaternary structure, homodimer. Mg(2+) is required as a cofactor.

The protein resides in the cytoplasm. It carries out the reaction IMP + L-aspartate + GTP = N(6)-(1,2-dicarboxyethyl)-AMP + GDP + phosphate + 2 H(+). Its pathway is purine metabolism; AMP biosynthesis via de novo pathway; AMP from IMP: step 1/2. Functionally, plays an important role in the de novo pathway of purine nucleotide biosynthesis. Catalyzes the first committed step in the biosynthesis of AMP from IMP. The protein is Adenylosuccinate synthetase of Bifidobacterium longum subsp. infantis (strain ATCC 15697 / DSM 20088 / JCM 1222 / NCTC 11817 / S12).